The following is a 265-amino-acid chain: Undecaprenyl-diphosphatase (265 aa).

8 consecutive transmembrane segments (helical) span residues 14-34, 40-60, 79-99, 112-132, 141-161, 182-202, 217-237, and 242-262; these read GLGE…PWLF, SLVF…VYFW, GKLF…GYLF, LLIA…DSIA, MNVF…FPGI, AKFS…VSLL, IGFF…LGIV, and FKIF…FYLL.

Belongs to the UppP family.

It localises to the cell membrane. It catalyses the reaction di-trans,octa-cis-undecaprenyl diphosphate + H2O = di-trans,octa-cis-undecaprenyl phosphate + phosphate + H(+). Catalyzes the dephosphorylation of undecaprenyl diphosphate (UPP). Confers resistance to bacitracin. This Caldicellulosiruptor bescii (strain ATCC BAA-1888 / DSM 6725 / KCTC 15123 / Z-1320) (Anaerocellum thermophilum) protein is Undecaprenyl-diphosphatase.